Reading from the N-terminus, the 475-residue chain is MDRRTKIVCTLGPAVASADGILRLVEDGMDVARLNFSHGDHPDHEQNYKWVREAAEKTGRAVGILADLQGPKIRLGRFTDGATVWENGETIRITVDDVEGTHDRVSTTYKNLAKDAKPGDRLLVDDGKVGLVCVSVEGNDVICEVVEGGPVSNNKGVSLPGMDISVPALSEKDIRDLRFALKLGVDFIALSFVRSPADAELVHKIMDEEGRRVPVIAKLEKPEAVTSLEPIVLAFDAVMVARGDLGVEVPLEEVPLVQKRAIQIARENAKPVIVATQMLDSMIENSRPTRAEASDVANAVLDGADAVMLSGETSVGKDPHNVVRTMSRIVRFAETDGRVPDLTHIPRTKRGVISYSARDIAERLNARALVAFTTSGDTAKRVARLHSHLPLLVFTPNEAVRSELALTWGATTFLCPPVSDTDDMMREVDRALLAMPEYNKGDMMVVVAGSPPGVTGNTNMIHVHLLGDDTRIAKL.

Arg33 contributes to the substrate binding site. Positions 35, 37, and 67 each coordinate K(+). Residue 35-38 (NFSH) coordinates ATP. Arg74 and Lys155 together coordinate ATP. Glu220 contributes to the Mg(2+) binding site. Substrate contacts are provided by Gly243, Asp244, and Thr276. Asp244 serves as a coordination point for Mg(2+).

Belongs to the pyruvate kinase family. In terms of assembly, homotetramer. Mg(2+) serves as cofactor. Requires K(+) as cofactor.

The enzyme catalyses pyruvate + ATP = phosphoenolpyruvate + ADP + H(+). The protein operates within carbohydrate degradation; glycolysis; pyruvate from D-glyceraldehyde 3-phosphate: step 5/5. This Corynebacterium glutamicum (strain ATCC 13032 / DSM 20300 / JCM 1318 / BCRC 11384 / CCUG 27702 / LMG 3730 / NBRC 12168 / NCIMB 10025 / NRRL B-2784 / 534) protein is Pyruvate kinase (pyk).